Reading from the N-terminus, the 149-residue chain is Large ribosomal subunit protein bL9 (149 aa).

Belongs to the bacterial ribosomal protein bL9 family.

Functionally, binds to the 23S rRNA. This chain is Large ribosomal subunit protein bL9, found in Vibrio cholerae serotype O1 (strain ATCC 39541 / Classical Ogawa 395 / O395).